The primary structure comprises 457 residues: Guanine nucleotide-binding protein subunit alpha homolog (457 aa).

Residues 131–457 (RQVKLLLLGA…QRNLNALMLQ (327 aa)) enclose the G-alpha domain. The segment at 134 to 147 (KLLLLGAGESGKST) is G1 motif. Residues 139-146 (GAGESGKS), 274-280 (LHCRKAT), 299-303 (DVGGQ), 369-372 (NKTD), and alanine 429 contribute to the GTP site. Serine 146 and threonine 280 together coordinate Mg(2+). The segment at 272 to 280 (DILHCRKAT) is G2 motif. A G3 motif region spans residues 295–304 (FVFVDVGGQR). Residues 365–372 (ILFLNKTD) form a G4 motif region. The tract at residues 427-432 (TTAIDT) is G5 motif.

The protein belongs to the G-alpha family. G(12) subfamily. G proteins are composed of 3 units; alpha, beta and gamma. The alpha chain contains the guanine nucleotide binding site. In terms of tissue distribution, in ovary, expressed in nurse cells and oocyte. In early embryos, distributed uniformly. At the extended germband stage, accumulates in the mesoderm.

The protein resides in the cytoplasm. In terms of biological role, may play a role in a signal transduction pathway used during gastrulation. Required specifically for the ventral furrow and posterior midgut invaginations, where it is necessary for coordinating cell shape changes. Guanine nucleotide-binding proteins (G proteins) are involved as modulators or transducers in various transmembrane signaling systems. The polypeptide is Guanine nucleotide-binding protein subunit alpha homolog (cta) (Drosophila melanogaster (Fruit fly)).